We begin with the raw amino-acid sequence, 399 residues long: 4-hydroxy-3-methylbut-2-enyl diphosphate reductase (399 aa).

Cysteine 66 is a [4Fe-4S] cluster binding site. Position 96 (histidine 96) interacts with (2E)-4-hydroxy-3-methylbut-2-enyl diphosphate. Residue histidine 96 coordinates dimethylallyl diphosphate. Histidine 96 is an isopentenyl diphosphate binding site. Position 157 (cysteine 157) interacts with [4Fe-4S] cluster. Histidine 185 provides a ligand contact to (2E)-4-hydroxy-3-methylbut-2-enyl diphosphate. Dimethylallyl diphosphate is bound at residue histidine 185. Histidine 185 contributes to the isopentenyl diphosphate binding site. Glutamate 187 functions as the Proton donor in the catalytic mechanism. Threonine 250 contributes to the (2E)-4-hydroxy-3-methylbut-2-enyl diphosphate binding site. Cysteine 288 is a binding site for [4Fe-4S] cluster. Serine 317, serine 318, asparagine 319, and serine 380 together coordinate (2E)-4-hydroxy-3-methylbut-2-enyl diphosphate. Positions 317, 318, 319, and 380 each coordinate dimethylallyl diphosphate. Isopentenyl diphosphate contacts are provided by serine 317, serine 318, asparagine 319, and serine 380.

This sequence belongs to the IspH family. The cofactor is [4Fe-4S] cluster.

It catalyses the reaction isopentenyl diphosphate + 2 oxidized [2Fe-2S]-[ferredoxin] + H2O = (2E)-4-hydroxy-3-methylbut-2-enyl diphosphate + 2 reduced [2Fe-2S]-[ferredoxin] + 2 H(+). It carries out the reaction dimethylallyl diphosphate + 2 oxidized [2Fe-2S]-[ferredoxin] + H2O = (2E)-4-hydroxy-3-methylbut-2-enyl diphosphate + 2 reduced [2Fe-2S]-[ferredoxin] + 2 H(+). It participates in isoprenoid biosynthesis; dimethylallyl diphosphate biosynthesis; dimethylallyl diphosphate from (2E)-4-hydroxy-3-methylbutenyl diphosphate: step 1/1. It functions in the pathway isoprenoid biosynthesis; isopentenyl diphosphate biosynthesis via DXP pathway; isopentenyl diphosphate from 1-deoxy-D-xylulose 5-phosphate: step 6/6. Functionally, catalyzes the conversion of 1-hydroxy-2-methyl-2-(E)-butenyl 4-diphosphate (HMBPP) into a mixture of isopentenyl diphosphate (IPP) and dimethylallyl diphosphate (DMAPP). Acts in the terminal step of the DOXP/MEP pathway for isoprenoid precursor biosynthesis. The protein is 4-hydroxy-3-methylbut-2-enyl diphosphate reductase of Parasynechococcus marenigrum (strain WH8102).